The following is a 468-amino-acid chain: ATP synthase subunit beta (468 aa).

Gly-155–Thr-162 is a binding site for ATP.

The protein belongs to the ATPase alpha/beta chains family. In terms of assembly, F-type ATPases have 2 components, CF(1) - the catalytic core - and CF(0) - the membrane proton channel. CF(1) has five subunits: alpha(3), beta(3), gamma(1), delta(1), epsilon(1). CF(0) has three main subunits: a(1), b(2) and c(9-12). The alpha and beta chains form an alternating ring which encloses part of the gamma chain. CF(1) is attached to CF(0) by a central stalk formed by the gamma and epsilon chains, while a peripheral stalk is formed by the delta and b chains.

The protein resides in the cell membrane. It carries out the reaction ATP + H2O + 4 H(+)(in) = ADP + phosphate + 5 H(+)(out). Produces ATP from ADP in the presence of a proton gradient across the membrane. The catalytic sites are hosted primarily by the beta subunits. This is ATP synthase subunit beta from Streptococcus agalactiae serotype III (strain NEM316).